Here is a 464-residue protein sequence, read N- to C-terminus: tRNA-2-methylthio-N(6)-dimethylallyladenosine synthase (464 aa).

The disordered stretch occupies residues 1 to 24 (MSDLVPLSRKPAPAAGGPAPSPAA). Over residues 8–18 (SRKPAPAAGGP) the composition is skewed to low complexity. An MTTase N-terminal domain is found at 27–142 (RKVYVHTFGC…LPEMVERARD (116 aa)). [4Fe-4S] cluster contacts are provided by Cys36, Cys72, Cys105, Cys180, Cys184, and Cys187. Positions 166–398 (ARGRVTAFVT…LAAQRRIAGE (233 aa)) constitute a Radical SAM core domain. Residues 401–464 (AGELGKVVEV…GGSSLSGTLA (64 aa)) form the TRAM domain.

It belongs to the methylthiotransferase family. MiaB subfamily. As to quaternary structure, monomer. [4Fe-4S] cluster is required as a cofactor.

It is found in the cytoplasm. The catalysed reaction is N(6)-dimethylallyladenosine(37) in tRNA + (sulfur carrier)-SH + AH2 + 2 S-adenosyl-L-methionine = 2-methylsulfanyl-N(6)-dimethylallyladenosine(37) in tRNA + (sulfur carrier)-H + 5'-deoxyadenosine + L-methionine + A + S-adenosyl-L-homocysteine + 2 H(+). In terms of biological role, catalyzes the methylthiolation of N6-(dimethylallyl)adenosine (i(6)A), leading to the formation of 2-methylthio-N6-(dimethylallyl)adenosine (ms(2)i(6)A) at position 37 in tRNAs that read codons beginning with uridine. The chain is tRNA-2-methylthio-N(6)-dimethylallyladenosine synthase from Anaeromyxobacter sp. (strain K).